Here is a 706-residue protein sequence, read N- to C-terminus: Probable N(6)-adenosine-methyltransferase MT-A70-like (706 aa).

Disordered regions lie at residues 64 to 114 (RPFV…VAAA) and 223 to 261 (TLPL…PDMW). Over residues 103–114 (SPGSSPASVAAA) the composition is skewed to low complexity. Pro residues predominate over residues 227–236 (LQPPPAPQMP). S-adenosyl-L-methionine is bound by residues 479–480 (DI) and Asp-497. Residues 567–580 (RIIRTGRTGHWLNH) form a positively charged region required for RNA-binding region. Residues Lys-614, 637-640 (RMHN), and 650-651 (NQ) contribute to the S-adenosyl-L-methionine site. Residues 669 to 706 (AYPDSEVQPPSPPRASAPIDGDQGTSQKPTVSDGERPA) form a disordered region.

This sequence belongs to the MT-A70-like family.

Its subcellular location is the nucleus. The catalysed reaction is an adenosine in mRNA + S-adenosyl-L-methionine = an N(6)-methyladenosine in mRNA + S-adenosyl-L-homocysteine + H(+). Probable N6-methyltransferase that methylates adenosine residues of some mRNAs. N6-methyladenosine (m6A), which is present at internal sites of some mRNAs, may play a role in the efficiency of mRNA splicing, transport or translation. The chain is Probable N(6)-adenosine-methyltransferase MT-A70-like from Oryza sativa subsp. japonica (Rice).